The primary structure comprises 445 residues: Ribosomal protein uS12 methylthiotransferase RimO (445 aa).

In terms of domain architecture, MTTase N-terminal spans 4–119 (YKVGMVSLGC…INEAIMNFIN (116 aa)). Positions 13, 48, 82, 157, 161, and 164 each coordinate [4Fe-4S] cluster. Residues 143-373 (TTDKATAYLR…MLLQKELSEE (231 aa)) form the Radical SAM core domain. In terms of domain architecture, TRAM spans 376 to 441 (KNKLGREYDV…EYDLVGVVCN (66 aa)).

It belongs to the methylthiotransferase family. RimO subfamily. It depends on [4Fe-4S] cluster as a cofactor.

The protein localises to the cytoplasm. It catalyses the reaction L-aspartate(89)-[ribosomal protein uS12]-hydrogen + (sulfur carrier)-SH + AH2 + 2 S-adenosyl-L-methionine = 3-methylsulfanyl-L-aspartate(89)-[ribosomal protein uS12]-hydrogen + (sulfur carrier)-H + 5'-deoxyadenosine + L-methionine + A + S-adenosyl-L-homocysteine + 2 H(+). Catalyzes the methylthiolation of an aspartic acid residue of ribosomal protein uS12. The protein is Ribosomal protein uS12 methylthiotransferase RimO of Clostridium perfringens (strain SM101 / Type A).